A 462-amino-acid polypeptide reads, in one-letter code: Chromosomal replication initiator protein DnaA (462 aa).

A domain I, interacts with DnaA modulators region spans residues 1–86 (MSLSLWQQCL…EVGNKPVSQN (86 aa)). Positions 86-125 (NDSPPQRVVTHTPVAPAPQNTSVRPSWDNTAVQPELSYRS) are domain II. A domain III, AAA+ region region spans residues 126–342 (NVNPKHTFDN…GALNRVIANA (217 aa)). Gly-170, Gly-172, Lys-173, and Thr-174 together coordinate ATP. A domain IV, binds dsDNA region spans residues 343–462 (NFTGRAITID…FSNLIRTLSS (120 aa)).

This sequence belongs to the DnaA family. In terms of assembly, oligomerizes as a right-handed, spiral filament on DNA at oriC.

The protein localises to the cytoplasm. In terms of biological role, plays an essential role in the initiation and regulation of chromosomal replication. ATP-DnaA binds to the origin of replication (oriC) to initiate formation of the DNA replication initiation complex once per cell cycle. Binds the DnaA box (a 9 base pair repeat at the origin) and separates the double-stranded (ds)DNA. Forms a right-handed helical filament on oriC DNA; dsDNA binds to the exterior of the filament while single-stranded (ss)DNA is stabiized in the filament's interior. The ATP-DnaA-oriC complex binds and stabilizes one strand of the AT-rich DNA unwinding element (DUE), permitting loading of DNA polymerase. After initiation quickly degrades to an ADP-DnaA complex that is not apt for DNA replication. Binds acidic phospholipids. The protein is Chromosomal replication initiator protein DnaA of Photorhabdus laumondii subsp. laumondii (strain DSM 15139 / CIP 105565 / TT01) (Photorhabdus luminescens subsp. laumondii).